Reading from the N-terminus, the 487-residue chain is Bifunctional protein GlmU (487 aa).

Residues 1 to 240 (MAEVTNCAAI…PEELSGVNDR (240 aa)) are pyrophosphorylase. Residues 12 to 15 (LAAG), lysine 26, glutamine 83, and 88 to 89 (GT) contribute to the UDP-N-acetyl-alpha-D-glucosamine site. Aspartate 113 lines the Mg(2+) pocket. Residues glycine 150, glutamate 165, asparagine 180, and asparagine 238 each coordinate UDP-N-acetyl-alpha-D-glucosamine. Asparagine 238 is a binding site for Mg(2+). The interval 241 to 261 (VQLAAAGRLLNRRMVEEAMRG) is linker. The N-acetyltransferase stretch occupies residues 262-487 (GTTIVDPDTT…DAKANDQTTN (226 aa)). UDP-N-acetyl-alpha-D-glucosamine contacts are provided by arginine 343 and lysine 361. Histidine 373 functions as the Proton acceptor in the catalytic mechanism. The UDP-N-acetyl-alpha-D-glucosamine site is built by tyrosine 376 and asparagine 387. Acetyl-CoA is bound by residues alanine 390, 396 to 397 (NY), serine 415, and alanine 433. The tract at residues 449 to 487 (SGGKQRNIEGWVQKKRPGTPAAEAAGKAQDAKANDQTTN) is disordered.

The protein in the N-terminal section; belongs to the N-acetylglucosamine-1-phosphate uridyltransferase family. In the C-terminal section; belongs to the transferase hexapeptide repeat family. Homotrimer. It depends on Mg(2+) as a cofactor.

The protein resides in the cytoplasm. It catalyses the reaction alpha-D-glucosamine 1-phosphate + acetyl-CoA = N-acetyl-alpha-D-glucosamine 1-phosphate + CoA + H(+). The catalysed reaction is N-acetyl-alpha-D-glucosamine 1-phosphate + UTP + H(+) = UDP-N-acetyl-alpha-D-glucosamine + diphosphate. The protein operates within nucleotide-sugar biosynthesis; UDP-N-acetyl-alpha-D-glucosamine biosynthesis; N-acetyl-alpha-D-glucosamine 1-phosphate from alpha-D-glucosamine 6-phosphate (route II): step 2/2. Its pathway is nucleotide-sugar biosynthesis; UDP-N-acetyl-alpha-D-glucosamine biosynthesis; UDP-N-acetyl-alpha-D-glucosamine from N-acetyl-alpha-D-glucosamine 1-phosphate: step 1/1. It functions in the pathway bacterial outer membrane biogenesis; LPS lipid A biosynthesis. Its function is as follows. Catalyzes the last two sequential reactions in the de novo biosynthetic pathway for UDP-N-acetylglucosamine (UDP-GlcNAc). The C-terminal domain catalyzes the transfer of acetyl group from acetyl coenzyme A to glucosamine-1-phosphate (GlcN-1-P) to produce N-acetylglucosamine-1-phosphate (GlcNAc-1-P), which is converted into UDP-GlcNAc by the transfer of uridine 5-monophosphate (from uridine 5-triphosphate), a reaction catalyzed by the N-terminal domain. The sequence is that of Bifunctional protein GlmU from Corynebacterium aurimucosum (strain ATCC 700975 / DSM 44827 / CIP 107346 / CN-1) (Corynebacterium nigricans).